The primary structure comprises 308 residues: Mitochondrial brown fat uncoupling protein 1 (308 aa).

Topologically, residues 1 to 10 are mitochondrial intermembrane; sequence MVASAEADVP. The chain crosses the membrane as a helical span at residues 11-33; it reads PPTMLVKIASAGLSACLADIITF. 3 Solcar repeats span residues 11 to 103, 112 to 202, and 211 to 296; these read PPTM…VQEY, ATLG…LKEA, and DDIP…LKKE. Over 34–74 the chain is Mitochondrial matrix; sequence PLDTAKVRLQVQGERPNAPGVKYKGVLGTIATVAKTEGPLK. Residue lysine 57 coordinates fatty acid 16:0. The helical transmembrane segment at 75-97 threads the bilayer; that stretch reads LYGGLPAGIQRQISFASLRIGLY. Topologically, residues 98–117 are mitochondrial intermembrane; the sequence is DTVQEYFNAHRKTPATLGNK. A helical transmembrane segment spans residues 118–134; the sequence is ISAGLMTGCVTVFIGQP. The Mitochondrial matrix portion of the chain corresponds to 135 to 179; that stretch reads TEVAKVRMQAQSSLHWLKPRYSGTYNAYYVIVKTEGFLGLWKGTS. A helical membrane pass occupies residues 180–196; that stretch reads LNLTRNVIINCTELVVY. At 197–213 the chain is on the mitochondrial intermembrane side; it reads DVLKEALVKNNVLADDI. A helical transmembrane segment spans residues 214 to 233; it reads PCHLLAALTAGFCTTALASP. Residues 234 to 267 are Mitochondrial matrix-facing; sequence VDVVKTRFINSPPGYYPHVHNCALNMLQKEGLRA. Position 255 is a cysteine sulfenic acid (-SOH) (cysteine 255). Residues 268–290 traverse the membrane as a helical segment; that stretch reads FFKGFVPSFLRLGSWTVIMHVTF. Fatty acid 16:0 is bound at residue lysine 270. Over 291 to 308 the chain is Mitochondrial intermembrane; the sequence is EQLKKELMKSRQTVDCAT.

The protein belongs to the mitochondrial carrier (TC 2.A.29) family. Most probably functions as a monomer. Binds one purine nucleotide per monomer. However, has also been suggested to function as a homodimer or a homotetramer. Tightly associates with cardiolipin in the mitochondrion inner membrane; may stabilize and regulate its activity. May undergo sulfenylation upon cold exposure. May increase the sensitivity of UCP1 thermogenic function to the activation by noradrenaline probably through structural effects. In terms of processing, may undergo ubiquitin-mediated proteasomal degradation. In terms of tissue distribution, brown adipose tissue.

It localises to the mitochondrion inner membrane. The catalysed reaction is H(+)(in) = H(+)(out). Its activity is regulated as follows. Has no constitutive proton transporter activity and has to be activated by long-chain fatty acids/LCFAs. Inhibited by purine nucleotides. Both purine nucleotides and LCFAs bind the cytosolic side of the transporter and directly compete to activate or inhibit it. Activated by noradrenaline and reactive oxygen species. Despite lacking canonical translational encoding for selenocysteine, a small pool of the protein has been observed to selectively incorporate selenocysteine at 'Cys-255'. Selenocysteine-modified protein is highly sensitive to redox modification and may constitute a pool of protein highly sensitive to activation by elevated levels of reactive oxygen species (ROS). Mitochondrial protein responsible for thermogenic respiration, a specialized capacity of brown adipose tissue and beige fat that participates in non-shivering adaptive thermogenesis to temperature and diet variations and more generally to the regulation of energy balance. Functions as a long-chain fatty acid/LCFA and proton symporter, simultaneously transporting one LCFA and one proton through the inner mitochondrial membrane. However, LCFAs remaining associated with the transporter via their hydrophobic tails, it results in an apparent transport of protons activated by LCFAs. Thereby, dissipates the mitochondrial proton gradient and converts the energy of substrate oxydation into heat instead of ATP. Regulates the production of reactive oxygen species/ROS by mitochondria. The sequence is that of Mitochondrial brown fat uncoupling protein 1 from Suncus murinus (Asian house shrew).